The chain runs to 101 residues: Large ribosomal subunit protein bL21 (101 aa).

Belongs to the bacterial ribosomal protein bL21 family. In terms of assembly, part of the 50S ribosomal subunit. Contacts protein L20.

Its function is as follows. This protein binds to 23S rRNA in the presence of protein L20. The chain is Large ribosomal subunit protein bL21 from Corynebacterium aurimucosum (strain ATCC 700975 / DSM 44827 / CIP 107346 / CN-1) (Corynebacterium nigricans).